We begin with the raw amino-acid sequence, 600 residues long: Aspartate--tRNA(Asp/Asn) ligase (600 aa).

Position 181 (Glu-181) interacts with L-aspartate. Residues 205–208 (QQFK) form an aspartate region. Arg-227 is an L-aspartate binding site. Residues 227–229 (RDE) and Gln-236 contribute to the ATP site. His-455 serves as a coordination point for L-aspartate. Glu-489 lines the ATP pocket. Arg-496 provides a ligand contact to L-aspartate. 541 to 544 (GIDR) serves as a coordination point for ATP.

This sequence belongs to the class-II aminoacyl-tRNA synthetase family. Type 1 subfamily. As to quaternary structure, homodimer.

It localises to the cytoplasm. The catalysed reaction is tRNA(Asx) + L-aspartate + ATP = L-aspartyl-tRNA(Asx) + AMP + diphosphate. Functionally, aspartyl-tRNA synthetase with relaxed tRNA specificity since it is able to aspartylate not only its cognate tRNA(Asp) but also tRNA(Asn). Reaction proceeds in two steps: L-aspartate is first activated by ATP to form Asp-AMP and then transferred to the acceptor end of tRNA(Asp/Asn). This Rubrobacter xylanophilus (strain DSM 9941 / JCM 11954 / NBRC 16129 / PRD-1) protein is Aspartate--tRNA(Asp/Asn) ligase.